The sequence spans 140 residues: Transcription antitermination protein NusB (140 aa).

This sequence belongs to the NusB family.

Involved in transcription antitermination. Required for transcription of ribosomal RNA (rRNA) genes. Binds specifically to the boxA antiterminator sequence of the ribosomal RNA (rrn) operons. This chain is Transcription antitermination protein NusB, found in Leptospira biflexa serovar Patoc (strain Patoc 1 / Ames).